Reading from the N-terminus, the 445-residue chain is Phosphoglucosamine mutase (445 aa).

Serine 102 (phosphoserine intermediate) is an active-site residue. 4 residues coordinate Mg(2+): serine 102, aspartate 241, aspartate 243, and aspartate 245. Phosphoserine is present on serine 102.

Belongs to the phosphohexose mutase family. It depends on Mg(2+) as a cofactor. Activated by phosphorylation.

The enzyme catalyses alpha-D-glucosamine 1-phosphate = D-glucosamine 6-phosphate. Its function is as follows. Catalyzes the conversion of glucosamine-6-phosphate to glucosamine-1-phosphate. The polypeptide is Phosphoglucosamine mutase (Aliivibrio fischeri (strain ATCC 700601 / ES114) (Vibrio fischeri)).